The following is a 144-amino-acid chain: Large ribosomal subunit protein uL11 (144 aa).

Belongs to the universal ribosomal protein uL11 family. As to quaternary structure, part of the ribosomal stalk of the 50S ribosomal subunit. Interacts with L10 and the large rRNA to form the base of the stalk. L10 forms an elongated spine to which L12 dimers bind in a sequential fashion forming a multimeric L10(L12)X complex. Post-translationally, one or more lysine residues are methylated.

Functionally, forms part of the ribosomal stalk which helps the ribosome interact with GTP-bound translation factors. The sequence is that of Large ribosomal subunit protein uL11 from Streptomyces coelicolor (strain ATCC BAA-471 / A3(2) / M145).